The primary structure comprises 338 residues: Glyceraldehyde-3-phosphate dehydrogenase 2 (338 aa).

NAD(+) contacts are provided by residues T13–I14 and G111. Residue S140 to N142 coordinates D-glyceraldehyde 3-phosphate. C141 functions as the Nucleophile in the catalytic mechanism. NAD(+) is bound at residue R169. A D-glyceraldehyde 3-phosphate-binding site is contributed by H195–G196. Q300 contributes to the NAD(+) binding site.

This sequence belongs to the glyceraldehyde-3-phosphate dehydrogenase family. In terms of assembly, homotetramer.

The protein resides in the cytoplasm. The catalysed reaction is D-glyceraldehyde 3-phosphate + phosphate + NADP(+) = (2R)-3-phospho-glyceroyl phosphate + NADPH + H(+). It carries out the reaction D-glyceraldehyde 3-phosphate + phosphate + NAD(+) = (2R)-3-phospho-glyceroyl phosphate + NADH + H(+). It functions in the pathway carbohydrate degradation; glycolysis; pyruvate from D-glyceraldehyde 3-phosphate: step 1/5. The chain is Glyceraldehyde-3-phosphate dehydrogenase 2 from Methanosarcina barkeri (strain Fusaro / DSM 804).